The chain runs to 886 residues: Isoleucine--tRNA ligase (886 aa).

The short motif at 60–70 (PYANGDIHIGH) is the 'HIGH' region element. Glutamate 546 is a binding site for L-isoleucyl-5'-AMP. Positions 587-591 (KMSKS) match the 'KMSKS' region motif. Lysine 590 serves as a coordination point for ATP. Positions 856, 859, 870, and 873 each coordinate Zn(2+).

Belongs to the class-I aminoacyl-tRNA synthetase family. IleS type 1 subfamily. As to quaternary structure, monomer. Requires Zn(2+) as cofactor.

It is found in the cytoplasm. It carries out the reaction tRNA(Ile) + L-isoleucine + ATP = L-isoleucyl-tRNA(Ile) + AMP + diphosphate. In terms of biological role, catalyzes the attachment of isoleucine to tRNA(Ile). As IleRS can inadvertently accommodate and process structurally similar amino acids such as valine, to avoid such errors it has two additional distinct tRNA(Ile)-dependent editing activities. One activity is designated as 'pretransfer' editing and involves the hydrolysis of activated Val-AMP. The other activity is designated 'posttransfer' editing and involves deacylation of mischarged Val-tRNA(Ile). This chain is Isoleucine--tRNA ligase, found in Mesomycoplasma hyopneumoniae (strain 7448) (Mycoplasma hyopneumoniae).